The following is a 95-amino-acid chain: Aspartyl/glutamyl-tRNA(Asn/Gln) amidotransferase subunit C (95 aa).

It belongs to the GatC family. In terms of assembly, heterotrimer of A, B and C subunits.

It catalyses the reaction L-glutamyl-tRNA(Gln) + L-glutamine + ATP + H2O = L-glutaminyl-tRNA(Gln) + L-glutamate + ADP + phosphate + H(+). It carries out the reaction L-aspartyl-tRNA(Asn) + L-glutamine + ATP + H2O = L-asparaginyl-tRNA(Asn) + L-glutamate + ADP + phosphate + 2 H(+). Its function is as follows. Allows the formation of correctly charged Asn-tRNA(Asn) or Gln-tRNA(Gln) through the transamidation of misacylated Asp-tRNA(Asn) or Glu-tRNA(Gln) in organisms which lack either or both of asparaginyl-tRNA or glutaminyl-tRNA synthetases. The reaction takes place in the presence of glutamine and ATP through an activated phospho-Asp-tRNA(Asn) or phospho-Glu-tRNA(Gln). The sequence is that of Aspartyl/glutamyl-tRNA(Asn/Gln) amidotransferase subunit C from Nitrosospira multiformis (strain ATCC 25196 / NCIMB 11849 / C 71).